A 676-amino-acid chain; its full sequence is UvrABC system protein B (676 aa).

Residues 39–424 (RGILDGIPSQ…RGHIIEQIIR (386 aa)) form the Helicase ATP-binding domain. An ATP-binding site is contributed by 52 to 59 (GTTGSGKT). A Beta-hairpin motif is present at residues 105–128 (YYDYYQPEAYIARSDTYIEKSLLI). One can recognise a Helicase C-terminal domain in the interval 441-604 (QIDDLLEEIR…ITPKPIIKPI (164 aa)). Residues 611–631 (KEGAQEDSRPETQSTEDLESS) form a disordered region. The region spanning 629 to 664 (ESSIKQYEEAMYKAAQDFQFDEAAKYRDLMNAAKRQ) is the UVR domain.

This sequence belongs to the UvrB family. In terms of assembly, forms a heterotetramer with UvrA during the search for lesions. Interacts with UvrC in an incision complex.

It localises to the cytoplasm. In terms of biological role, the UvrABC repair system catalyzes the recognition and processing of DNA lesions. A damage recognition complex composed of 2 UvrA and 2 UvrB subunits scans DNA for abnormalities. Upon binding of the UvrA(2)B(2) complex to a putative damaged site, the DNA wraps around one UvrB monomer. DNA wrap is dependent on ATP binding by UvrB and probably causes local melting of the DNA helix, facilitating insertion of UvrB beta-hairpin between the DNA strands. Then UvrB probes one DNA strand for the presence of a lesion. If a lesion is found the UvrA subunits dissociate and the UvrB-DNA preincision complex is formed. This complex is subsequently bound by UvrC and the second UvrB is released. If no lesion is found, the DNA wraps around the other UvrB subunit that will check the other stand for damage. The protein is UvrABC system protein B of Chlamydia muridarum (strain MoPn / Nigg).